The sequence spans 592 residues: A-type ATP synthase subunit A (592 aa).

233–240 (GPFGSGKT) provides a ligand contact to ATP.

Belongs to the ATPase alpha/beta chains family. In terms of assembly, has multiple subunits with at least A(3), B(3), C, D, E, F, H, I and proteolipid K(x).

It localises to the cell membrane. It carries out the reaction ATP + H2O + 4 H(+)(in) = ADP + phosphate + 5 H(+)(out). Its function is as follows. Component of the A-type ATP synthase that produces ATP from ADP in the presence of a proton gradient across the membrane. The A chain is the catalytic subunit. This Saccharolobus islandicus (strain L.S.2.15 / Lassen #1) (Sulfolobus islandicus) protein is A-type ATP synthase subunit A.